Consider the following 191-residue polypeptide: Adenylate kinase (191 aa).

9–17 (GVPGVGATT) contacts ATP.

The protein belongs to the archaeal adenylate kinase family.

The protein localises to the cytoplasm. The enzyme catalyses AMP + ATP = 2 ADP. The protein is Adenylate kinase of Methanopyrus kandleri (strain AV19 / DSM 6324 / JCM 9639 / NBRC 100938).